A 90-amino-acid polypeptide reads, in one-letter code: MPRRVLTGRVTSDKMDKTVTVLLDRRIMHPLYKKFIRRSKKYAAHDEENVCQTGDLVRIEECAPISKRKTWSVVSRNGEDLASASSSVSA.

The protein belongs to the universal ribosomal protein uS17 family. As to quaternary structure, part of the 30S ribosomal subunit.

In terms of biological role, one of the primary rRNA binding proteins, it binds specifically to the 5'-end of 16S ribosomal RNA. The polypeptide is Small ribosomal subunit protein uS17 (Gluconobacter oxydans (strain 621H) (Gluconobacter suboxydans)).